The sequence spans 69 residues: Cell division protein ZapB (69 aa).

A coiled-coil region spans residues 3 to 60 (LELFNQLEQKVQNAVETIEMLKMEAEELREENTRLKQERDEWERRLNGLLGKFQEIED).

This sequence belongs to the ZapB family. In terms of assembly, homodimer. The ends of the coiled-coil dimer bind to each other, forming polymers. Interacts with FtsZ.

It localises to the cytoplasm. Functionally, non-essential, abundant cell division factor that is required for proper Z-ring formation. It is recruited early to the divisome by direct interaction with FtsZ, stimulating Z-ring assembly and thereby promoting cell division earlier in the cell cycle. Its recruitment to the Z-ring requires functional FtsA or ZipA. The sequence is that of Cell division protein ZapB from Chromohalobacter salexigens (strain ATCC BAA-138 / DSM 3043 / CIP 106854 / NCIMB 13768 / 1H11).